We begin with the raw amino-acid sequence, 105 residues long: Small ribosomal subunit protein uS10 (105 aa).

It belongs to the universal ribosomal protein uS10 family. As to quaternary structure, part of the 30S ribosomal subunit.

Its function is as follows. Involved in the binding of tRNA to the ribosomes. This chain is Small ribosomal subunit protein uS10, found in Rickettsia peacockii (strain Rustic).